The primary structure comprises 701 residues: Elongation factor G (701 aa).

The tr-type G domain maps to 8–290 (ERYRNIGISA…AVVDYLPAPT (283 aa)). Residues 17-24 (AHIDAGKT), 88-92 (DTPGH), and 142-145 (NKMD) each bind GTP.

It belongs to the TRAFAC class translation factor GTPase superfamily. Classic translation factor GTPase family. EF-G/EF-2 subfamily.

It is found in the cytoplasm. Catalyzes the GTP-dependent ribosomal translocation step during translation elongation. During this step, the ribosome changes from the pre-translocational (PRE) to the post-translocational (POST) state as the newly formed A-site-bound peptidyl-tRNA and P-site-bound deacylated tRNA move to the P and E sites, respectively. Catalyzes the coordinated movement of the two tRNA molecules, the mRNA and conformational changes in the ribosome. The chain is Elongation factor G from Aeromonas salmonicida (strain A449).